The primary structure comprises 51 residues: Insulin (51 aa).

3 disulfide bridges follow: C8-C37, C20-C50, and C36-C41.

It belongs to the insulin family. As to quaternary structure, heterodimer of a B chain and an A chain linked by two disulfide bonds.

Its subcellular location is the secreted. Its function is as follows. Insulin decreases blood glucose concentration. It increases cell permeability to monosaccharides, amino acids and fatty acids. It accelerates glycolysis, the pentose phosphate cycle, and glycogen synthesis in liver. This is Insulin from Seriola quinqueradiata (Five-ray yellowtail).